The sequence spans 177 residues: Large ribosomal subunit protein uL6 (177 aa).

The protein belongs to the universal ribosomal protein uL6 family. As to quaternary structure, part of the 50S ribosomal subunit.

Its function is as follows. This protein binds to the 23S rRNA, and is important in its secondary structure. It is located near the subunit interface in the base of the L7/L12 stalk, and near the tRNA binding site of the peptidyltransferase center. The sequence is that of Large ribosomal subunit protein uL6 from Rickettsia massiliae (strain Mtu5).